We begin with the raw amino-acid sequence, 94 residues long: Sec-independent protein translocase protein TatA (94 aa).

Residues 1-21 (MFGRLGAPEIILILVVIILLF) traverse the membrane as a helical segment. Residues 44–94 (AKAMKSEGQESTPAGPPNTDEQPPAQRTIQAAPGDVTSSRPVSEPTDTTKR) form a disordered region. Residues 62-72 (TDEQPPAQRTI) are compositionally biased toward polar residues.

Belongs to the TatA/E family. In terms of assembly, the Tat system comprises two distinct complexes: a TatABC complex, containing multiple copies of TatA, TatB and TatC subunits, and a separate TatA complex, containing only TatA subunits. Substrates initially bind to the TatABC complex, which probably triggers association of the separate TatA complex to form the active translocon.

Its subcellular location is the cell membrane. Functionally, part of the twin-arginine translocation (Tat) system that transports large folded proteins containing a characteristic twin-arginine motif in their signal peptide across membranes. TatA could form the protein-conducting channel of the Tat system. The polypeptide is Sec-independent protein translocase protein TatA (Streptomyces avermitilis (strain ATCC 31267 / DSM 46492 / JCM 5070 / NBRC 14893 / NCIMB 12804 / NRRL 8165 / MA-4680)).